Reading from the N-terminus, the 460-residue chain is Protein Peter pan (460 aa).

Positions 28-290 (PHSFVIHRGL…LIKIEEGLLT (263 aa)) constitute a Brix domain. Phosphoserine is present on residues S237 and S239. Positions 295–350 (YHDHVVKTEDEKETLRKLVEKKRKQKEQRKKEQAENRARNLKLKKDEKWAAKRAAE) form a coiled coil. The interval 315 to 460 (KKRKQKEQRK…FDHRKSRKSK (146 aa)) is disordered. 2 stretches are compositionally biased toward basic and acidic residues: residues 323–355 (RKKEQAENRARNLKLKKDEKWAAKRAAEGRTDS) and 401–446 (AKLD…DPKN). Residue T353 is modified to Phosphothreonine. S355 bears the Phosphoserine mark. Residues 447–460 (KRAKFDHRKSRKSK) are compositionally biased toward basic residues.

It belongs to the PPAN family. In terms of tissue distribution, ubiquitous.

In terms of biological role, required for initiation of larval growth and normal mitotic growth but is not absolutely required for general biosynthesis or DNA replication. Required for progression of normal oogenesis and maturation of some imaginal tissues into adult structures. The protein is Protein Peter pan (ppan) of Drosophila melanogaster (Fruit fly).